Reading from the N-terminus, the 308-residue chain is Phosphoribosylaminoimidazole-succinocarboxamide synthase (308 aa).

It belongs to the SAICAR synthetase family.

It carries out the reaction 5-amino-1-(5-phospho-D-ribosyl)imidazole-4-carboxylate + L-aspartate + ATP = (2S)-2-[5-amino-1-(5-phospho-beta-D-ribosyl)imidazole-4-carboxamido]succinate + ADP + phosphate + 2 H(+). The protein operates within purine metabolism; IMP biosynthesis via de novo pathway; 5-amino-1-(5-phospho-D-ribosyl)imidazole-4-carboxamide from 5-amino-1-(5-phospho-D-ribosyl)imidazole-4-carboxylate: step 1/2. This Xylella fastidiosa (strain Temecula1 / ATCC 700964) protein is Phosphoribosylaminoimidazole-succinocarboxamide synthase.